The following is a 177-amino-acid chain: Probable phospholipid hydroperoxide glutathione peroxidase (177 aa).

C42 is a catalytic residue.

This sequence belongs to the glutathione peroxidase family.

The protein resides in the cytoplasm. It carries out the reaction a hydroperoxy polyunsaturated fatty acid + 2 glutathione = a hydroxy polyunsaturated fatty acid + glutathione disulfide + H2O. Functionally, protects cells and enzymes from oxidative damage, by catalyzing the reduction of hydrogen peroxide, lipid peroxides and organic hydroperoxide, by glutathione. This is Probable phospholipid hydroperoxide glutathione peroxidase from Encephalitozoon cuniculi (strain GB-M1) (Microsporidian parasite).